The following is a 1415-amino-acid chain: DNA-directed RNA polymerase subunit beta' (1415 aa).

Residues C214, C294, C301, and C304 each contribute to the Zn(2+) site. Over residues 1335–1351 (QNFVDSQGKPQSQSSFI) the composition is skewed to polar residues. Residues 1335–1390 (QNFVDSQGKPQSQSSFIDDSMSEFSPVKDKSGSVLDDSDFPPGNFDSDFPADNYDL) form a disordered region.

This sequence belongs to the RNA polymerase beta' chain family. RpoC2 subfamily. As to quaternary structure, in cyanobacteria the RNAP catalytic core is composed of 2 alpha, 1 beta, 1 beta', 1 gamma and 1 omega subunit. When a sigma factor is associated with the core the holoenzyme is formed, which can initiate transcription. The cofactor is Zn(2+).

The catalysed reaction is RNA(n) + a ribonucleoside 5'-triphosphate = RNA(n+1) + diphosphate. DNA-dependent RNA polymerase catalyzes the transcription of DNA into RNA using the four ribonucleoside triphosphates as substrates. The sequence is that of DNA-directed RNA polymerase subunit beta' from Trichodesmium erythraeum (strain IMS101).